A 413-amino-acid polypeptide reads, in one-letter code: 2,3-diketo-5-methylthiopentyl-1-phosphate enolase (413 aa).

The Proton acceptor role is filled by lysine 98. Residues lysine 147, 173–176, histidine 264, glycine 337, and 359–360 contribute to the substrate site; these read KDDE and GG. Residues lysine 173, aspartate 175, and glutamate 176 each coordinate Mg(2+). Lysine 173 is modified (N6-carboxylysine).

The protein belongs to the RuBisCO large chain family. Type IV subfamily. As to quaternary structure, homodimer. Mg(2+) is required as a cofactor.

The catalysed reaction is 5-methylsulfanyl-2,3-dioxopentyl phosphate = 2-hydroxy-5-methylsulfanyl-3-oxopent-1-enyl phosphate. It functions in the pathway amino-acid biosynthesis; L-methionine biosynthesis via salvage pathway; L-methionine from S-methyl-5-thio-alpha-D-ribose 1-phosphate: step 3/6. Functionally, catalyzes the enolization of 2,3-diketo-5-methylthiopentyl-1-phosphate (DK-MTP-1-P) into 2-hydroxy-3-keto-5-methylthiopentenyl-1-phosphate (HK-MTPenyl-1-P). This Geobacillus kaustophilus (strain HTA426) protein is 2,3-diketo-5-methylthiopentyl-1-phosphate enolase (mtnW).